A 367-amino-acid chain; its full sequence is Zinc metalloproteinase nas-22 (367 aa).

Residues 1–16 form the signal peptide; that stretch reads MKSFFILLSILQECYG. The Peptidase M12A domain maps to 41–237; it reads VLIRGSDEER…LMINKYYECS (197 aa). N-linked (GlcNAc...) asparagine glycosylation is found at Asn56 and Asn85. 4 disulfides stabilise this stretch: Cys88-Cys236, Cys111-Cys130, Cys238-Cys258, and Cys260-Cys269. His138 is a binding site for Zn(2+). Glu139 is a catalytic residue. Zn(2+) is bound by residues His142 and His148. 3 N-linked (GlcNAc...) asparagine glycosylation sites follow: Asn169, Asn241, and Asn254. Residues 232 to 270 enclose the EGF-like domain; that stretch reads KYYECSCANNLSCKNHGYPNPSNCSQCNCPYGFGGADCS. N-linked (GlcNAc...) asparagine glycosylation is found at Asn287 and Asn322.

Requires Zn(2+) as cofactor. Expressed in uterine seam (utse) cell.

The protein localises to the secreted. Its function is as follows. Metalloprotease. The sequence is that of Zinc metalloproteinase nas-22 (nas-22) from Caenorhabditis elegans.